Consider the following 154-residue polypeptide: SsrA-binding protein (154 aa).

The protein belongs to the SmpB family.

It localises to the cytoplasm. Its function is as follows. Required for rescue of stalled ribosomes mediated by trans-translation. Binds to transfer-messenger RNA (tmRNA), required for stable association of tmRNA with ribosomes. tmRNA and SmpB together mimic tRNA shape, replacing the anticodon stem-loop with SmpB. tmRNA is encoded by the ssrA gene; the 2 termini fold to resemble tRNA(Ala) and it encodes a 'tag peptide', a short internal open reading frame. During trans-translation Ala-aminoacylated tmRNA acts like a tRNA, entering the A-site of stalled ribosomes, displacing the stalled mRNA. The ribosome then switches to translate the ORF on the tmRNA; the nascent peptide is terminated with the 'tag peptide' encoded by the tmRNA and targeted for degradation. The ribosome is freed to recommence translation, which seems to be the essential function of trans-translation. The protein is SsrA-binding protein of Treponema denticola (strain ATCC 35405 / DSM 14222 / CIP 103919 / JCM 8153 / KCTC 15104).